The sequence spans 473 residues: MKTLYSLRRFYHVETLFNGTLSISGRDQESTGFAWWSGNARLINLSGKLLGAHVAHAGLIVFWAGAMNLFEVAHFTPEKPMYEQGLILLPHLATLGWGVGPGGEVIDTFPYFVSGVLHLISSAVLGFGGVYHSLIGPETLEESFPFFGYVWKDKNKMTTILGIHLIVLGVGAYLLVWKACYFGGVYDTWAPGGGDVRIITDPTLSPAVIFGYLLKSPFGGEGWICSVDNMEDVIGGHIWIGNLLIFGGIWHILTKPWAWARRAFVWSGEAYLSYSLGAIATMGWIACCFSWFNNTAYPSEFYGPTGPEASQAQAFTFLVRDQRLGANIASSQGPTGLGKYLMRSPSGEIIFGGETMRFWDCRAPWIEPLRGPNGLDLNKLKNDIQPWQERRSAEYMTHAPLGSLNSVGGVATEINAVNFVSPRSWLATSHFTLAFFFFVGHLWHAGRARAAAAGFEKGIERETEPVLFMKPLD.

A propeptide spanning residues 1–14 (MKTLYSLRRFYHVE) is cleaved from the precursor. Residue Thr-15 is modified to N-acetylthreonine. Thr-15 carries the phosphothreonine modification. The next 5 membrane-spanning stretches (helical) occupy residues 69–93 (LFEVAHFTPEKPMYEQGLILLPHLA), 134–155 (LIGPETLEESFPFFGYVWKDKN), 178–200 (KACYFGGVYDTWAPGGGDVRIIT), 255–275 (KPWAWARRAFVWSGEAYLSYS), and 291–312 (WFNNTAYPSEFYGPTGPEASQA). Residue Glu-367 coordinates [CaMn4O5] cluster. The helical transmembrane segment at 447-471 (RARAAAAGFEKGIERETEPVLFMKP) threads the bilayer.

It belongs to the PsbB/PsbC family. PsbC subfamily. PSII is composed of 1 copy each of membrane proteins PsbA, PsbB, PsbC, PsbD, PsbE, PsbF, PsbH, PsbI, PsbJ, PsbK, PsbL, PsbM, PsbT, PsbX, PsbY, PsbZ, Psb30/Ycf12, at least 3 peripheral proteins of the oxygen-evolving complex and a large number of cofactors. It forms dimeric complexes. Binds multiple chlorophylls and provides some of the ligands for the Ca-4Mn-5O cluster of the oxygen-evolving complex. It may also provide a ligand for a Cl- that is required for oxygen evolution. PSII binds additional chlorophylls, carotenoids and specific lipids. serves as cofactor.

Its subcellular location is the plastid. The protein localises to the chloroplast thylakoid membrane. One of the components of the core complex of photosystem II (PSII). It binds chlorophyll and helps catalyze the primary light-induced photochemical processes of PSII. PSII is a light-driven water:plastoquinone oxidoreductase, using light energy to abstract electrons from H(2)O, generating O(2) and a proton gradient subsequently used for ATP formation. The polypeptide is Photosystem II CP43 reaction center protein (Mesostigma viride (Green alga)).